Consider the following 466-residue polypeptide: ATP synthase subunit beta (466 aa).

152–159 contributes to the ATP binding site; sequence GGAGVGKT.

The protein belongs to the ATPase alpha/beta chains family. F-type ATPases have 2 components, CF(1) - the catalytic core - and CF(0) - the membrane proton channel. CF(1) has five subunits: alpha(3), beta(3), gamma(1), delta(1), epsilon(1). CF(0) has three main subunits: a(1), b(2) and c(9-12). The alpha and beta chains form an alternating ring which encloses part of the gamma chain. CF(1) is attached to CF(0) by a central stalk formed by the gamma and epsilon chains, while a peripheral stalk is formed by the delta and b chains.

It localises to the cell inner membrane. The catalysed reaction is ATP + H2O + 4 H(+)(in) = ADP + phosphate + 5 H(+)(out). Its function is as follows. Produces ATP from ADP in the presence of a proton gradient across the membrane. The catalytic sites are hosted primarily by the beta subunits. This chain is ATP synthase subunit beta, found in Sulfurovum sp. (strain NBC37-1).